Consider the following 454-residue polypeptide: Histidine--tRNA ligase (454 aa).

It belongs to the class-II aminoacyl-tRNA synthetase family. In terms of assembly, homodimer.

It is found in the cytoplasm. The catalysed reaction is tRNA(His) + L-histidine + ATP = L-histidyl-tRNA(His) + AMP + diphosphate + H(+). The sequence is that of Histidine--tRNA ligase from Phocaeicola vulgatus (strain ATCC 8482 / DSM 1447 / JCM 5826 / CCUG 4940 / NBRC 14291 / NCTC 11154) (Bacteroides vulgatus).